A 476-amino-acid polypeptide reads, in one-letter code: Siroheme synthase (476 aa).

The tract at residues 1 to 203 (MNYFPVFADL…RQIEAAKKEL (203 aa)) is precorrin-2 dehydrogenase /sirohydrochlorin ferrochelatase. Residues 22–23 (TI) and 43–44 (QK) contribute to the NAD(+) site. Phosphoserine is present on Ser128. Residues 214-476 (GSVSLVGAGP…LDSLRIERVA (263 aa)) form a uroporphyrinogen-III C-methyltransferase region. Pro223 provides a ligand contact to S-adenosyl-L-methionine. Asp246 functions as the Proton acceptor in the catalytic mechanism. Lys268 acts as the Proton donor in catalysis. S-adenosyl-L-methionine is bound by residues 299-301 (GGD), Val304, 329-330 (TA), Met381, and Gly410.

This sequence in the N-terminal section; belongs to the precorrin-2 dehydrogenase / sirohydrochlorin ferrochelatase family. The protein in the C-terminal section; belongs to the precorrin methyltransferase family.

The catalysed reaction is uroporphyrinogen III + 2 S-adenosyl-L-methionine = precorrin-2 + 2 S-adenosyl-L-homocysteine + H(+). It catalyses the reaction precorrin-2 + NAD(+) = sirohydrochlorin + NADH + 2 H(+). The enzyme catalyses siroheme + 2 H(+) = sirohydrochlorin + Fe(2+). It functions in the pathway cofactor biosynthesis; adenosylcobalamin biosynthesis; precorrin-2 from uroporphyrinogen III: step 1/1. The protein operates within cofactor biosynthesis; adenosylcobalamin biosynthesis; sirohydrochlorin from precorrin-2: step 1/1. It participates in porphyrin-containing compound metabolism; siroheme biosynthesis; precorrin-2 from uroporphyrinogen III: step 1/1. Its pathway is porphyrin-containing compound metabolism; siroheme biosynthesis; siroheme from sirohydrochlorin: step 1/1. It functions in the pathway porphyrin-containing compound metabolism; siroheme biosynthesis; sirohydrochlorin from precorrin-2: step 1/1. Functionally, multifunctional enzyme that catalyzes the SAM-dependent methylations of uroporphyrinogen III at position C-2 and C-7 to form precorrin-2 via precorrin-1. Then it catalyzes the NAD-dependent ring dehydrogenation of precorrin-2 to yield sirohydrochlorin. Finally, it catalyzes the ferrochelation of sirohydrochlorin to yield siroheme. The chain is Siroheme synthase from Mannheimia succiniciproducens (strain KCTC 0769BP / MBEL55E).